Reading from the N-terminus, the 88-residue chain is Small ribosomal subunit protein bS20 (88 aa).

The interval 1-25 (MANSAQARKRVRQNNTRRQHAASQR) is disordered. The span at 7–20 (ARKRVRQNNTRRQH) shows a compositional bias: basic residues.

The protein belongs to the bacterial ribosomal protein bS20 family.

Binds directly to 16S ribosomal RNA. The polypeptide is Small ribosomal subunit protein bS20 (Psychrobacter sp. (strain PRwf-1)).